We begin with the raw amino-acid sequence, 122 residues long: Large ribosomal subunit protein uL14 (122 aa).

It belongs to the universal ribosomal protein uL14 family. As to quaternary structure, part of the 50S ribosomal subunit. Forms a cluster with proteins L3 and L19. In the 70S ribosome, L14 and L19 interact and together make contacts with the 16S rRNA in bridges B5 and B8.

Its function is as follows. Binds to 23S rRNA. Forms part of two intersubunit bridges in the 70S ribosome. This is Large ribosomal subunit protein uL14 from Halothermothrix orenii (strain H 168 / OCM 544 / DSM 9562).